The chain runs to 597 residues: C4b-binding protein alpha chain (597 aa).

Residues M1 to G48 form the signal peptide. 8 Sushi domains span residues N49–Y110, K111–I172, V173–K236, I237–P296, N297–A362, L363–D424, I425–A482, and L483–W540. Intrachain disulfides connect C50–C96, C81–C108, C113–C154, C140–C170, C175–C217, C203–C234, C239–C281, C267–C294, C299–C348, C332–C360, C365–C409, C399–C422, C426–C468, C454–C480, C484–C525, and C511–C538. N221 carries an N-linked (GlcNAc...) asparagine glycan. N506 and N528 each carry an N-linked (GlcNAc...) asparagine glycan.

Disulfide-linked complex of alpha and beta chains of 3 possible sorts: a 570 kDa complex of 7 alpha chains and 1 beta chain, a 530 kDa homoheptamer of alpha chains or a 500 kDa complex of 6 alpha chains and 1 beta chain. The central body of the alpha chain homomer supports tentacles, each with the binding site for C4b at the end. As to quaternary structure, (Microbial infection) Interacts with Staphylococcus aureus protein SdrE; this interaction inhibits complement-mediated bacterial opsonization. In terms of tissue distribution, chylomicrons in the plasma.

It localises to the secreted. In terms of biological role, controls the classical pathway of complement activation. It binds as a cofactor to C3b/C4b inactivator (C3bINA), which then hydrolyzes the complement fragment C4b. It also accelerates the degradation of the C4bC2a complex (C3 convertase) by dissociating the complement fragment C2a. Alpha chain binds C4b. It also interacts with anticoagulant protein S and with serum amyloid P component. The protein is C4b-binding protein alpha chain (C4BPA) of Homo sapiens (Human).